The following is a 179-amino-acid chain: Low molecular weight phosphotyrosine protein phosphatase (179 aa).

The active-site Nucleophile is Cys-15. Arg-21 is an active-site residue. The Proton donor role is filled by Asp-148.

The protein belongs to the low molecular weight phosphotyrosine protein phosphatase family.

The protein localises to the cytoplasm. It catalyses the reaction O-phospho-L-tyrosyl-[protein] + H2O = L-tyrosyl-[protein] + phosphate. It carries out the reaction a phosphate monoester + H2O = an alcohol + phosphate. Acts on tyrosine phosphorylated proteins, low-MW aryl phosphates and natural and synthetic acyl phosphates. The sequence is that of Low molecular weight phosphotyrosine protein phosphatase (acp1) from Dictyostelium discoideum (Social amoeba).